The following is a 413-amino-acid chain: GDP-mannose-dependent alpha-mannosyltransferase (413 aa).

The protein belongs to the glycosyltransferase group 1 family.

Its pathway is phospholipid metabolism; phosphatidylinositol metabolism. In terms of biological role, catalyzes the addition of a mannose residue from GDP-D-mannose to GlcAGroAc2 to generate 1,2-di-O-C16/C18:1-(alpha-D-mannopyranosyl)-(1-4)-(alpha-D-glucopyranosyluronic acid)-(1-3)-glycerol(ManGlcAGroAc2). This is GDP-mannose-dependent alpha-mannosyltransferase (mgtA) from Corynebacterium glutamicum (strain ATCC 13032 / DSM 20300 / JCM 1318 / BCRC 11384 / CCUG 27702 / LMG 3730 / NBRC 12168 / NCIMB 10025 / NRRL B-2784 / 534).